A 790-amino-acid polypeptide reads, in one-letter code: Protein SEY1 (790 aa).

At 1-692 the chain is on the cytoplasmic side; that stretch reads MELSEGELSH…KRSIVQHITQ (692 aa). Positions 55–284 constitute a GB1/RHD3-type G domain; it reads GNNYHIISVF…VNNELFKPEY (230 aa). 65-72 contacts GTP; it reads GSQSTGKS. Residues 693 to 713 traverse the membrane as a helical segment; it reads IPYYIYLIILVLGWNEFMAII. Over 714–716 the chain is Lumenal; it reads RNP. The chain crosses the membrane as a helical span at residues 717–737; sequence LFFSLSIVLGATVYVLYYLNL. Topologically, residues 738–790 are cytoplasmic; sequence LKPAMLVAQRTMDEVIIMAKTKLREVLIDDHEVTGRQLNKIAGGKENIELDDM.

Belongs to the TRAFAC class dynamin-like GTPase superfamily. GB1/RHD3 GTPase family. RHD3 subfamily.

The protein localises to the endoplasmic reticulum membrane. In terms of biological role, cooperates with the reticulon proteins and tubule-shaping DP1 family proteins to generate and maintain the structure of the tubular endoplasmic reticulum network. Has GTPase activity, which is required for its function in ER organization. This is Protein SEY1 from Candida dubliniensis (strain CD36 / ATCC MYA-646 / CBS 7987 / NCPF 3949 / NRRL Y-17841) (Yeast).